The primary structure comprises 848 residues: DNA mismatch repair protein MutS (848 aa).

610–617 (GPNMGGKS) is an ATP binding site.

Belongs to the DNA mismatch repair MutS family.

In terms of biological role, this protein is involved in the repair of mismatches in DNA. It is possible that it carries out the mismatch recognition step. This protein has a weak ATPase activity. The sequence is that of DNA mismatch repair protein MutS from Francisella philomiragia subsp. philomiragia (strain ATCC 25017 / CCUG 19701 / FSC 153 / O#319-036).